Here is a 491-residue protein sequence, read N- to C-terminus: Aspartyl/glutamyl-tRNA(Asn/Gln) amidotransferase subunit B (491 aa).

It belongs to the GatB/GatE family. GatB subfamily. As to quaternary structure, heterotrimer of A, B and C subunits.

The enzyme catalyses L-glutamyl-tRNA(Gln) + L-glutamine + ATP + H2O = L-glutaminyl-tRNA(Gln) + L-glutamate + ADP + phosphate + H(+). It catalyses the reaction L-aspartyl-tRNA(Asn) + L-glutamine + ATP + H2O = L-asparaginyl-tRNA(Asn) + L-glutamate + ADP + phosphate + 2 H(+). Its function is as follows. Allows the formation of correctly charged Asn-tRNA(Asn) or Gln-tRNA(Gln) through the transamidation of misacylated Asp-tRNA(Asn) or Glu-tRNA(Gln) in organisms which lack either or both of asparaginyl-tRNA or glutaminyl-tRNA synthetases. The reaction takes place in the presence of glutamine and ATP through an activated phospho-Asp-tRNA(Asn) or phospho-Glu-tRNA(Gln). The protein is Aspartyl/glutamyl-tRNA(Asn/Gln) amidotransferase subunit B of Burkholderia ambifaria (strain ATCC BAA-244 / DSM 16087 / CCUG 44356 / LMG 19182 / AMMD) (Burkholderia cepacia (strain AMMD)).